The chain runs to 1101 residues: MATPSGKAAPPNPQVSKRSLPRDASSEVPSKRKNSNPLPTLPRPSGTFVEGSIVRIAMENFLTYDICEVSPGPHLNMIIGANGTGKSSIVCAICLGLAGKPAFMGRADKVGFFVKRGCSKGLVEIELFRTSGNLIITREIDVIKNQSFWFINKKPVTQKIVEEQVAALNIQVGNLCQFLPQDKVGEFAKLSKIELLEATEKSVGPPEMHRYHCELKNFREKEKQLETSCKEKTEYLEKMVQRNERYKQDVERFYERKRHLDLIEMLEAKRPWVEYENVRQEYEGVKLIRDRVKEEVRKLKEGQIPMTRRIEEIDRQRHTLEVRIKEKSTDIKEASQKCKQRQDLIERKDRQIKELQQALTVKQNEELDRQKRISNTRKMIEDLQSELKTAENCENLQPQIDTVTNDLRRVQEEKALCEGEIIDKQREKEMLEKQRRSVSDHITRFDNLMNQKEDKLRQRYRDTYDAVLWLRNNRDRFKQRVCEPIMLTINMKDNKNAKYVENHISSNDLRAFVFESQEDMEIFLREVRDNKKLRVNAVIAPKISYADKAPSRSLNDLKQYGFFSYLRELFDAPDPVMSYLCCQYHIHEVPVGTERTRERIERVIQETRLKQIYTAEEKYVLKTSVYSNKVISSNTSLKVAQFLTVTVDLEQRRHLEEQLKEMNRQLEAVDSGLAALRDTNRHLELKDNELRLKKKELLERKTRKRQLEQKISSKLASIRLMEQDTCNLEEEERKASTKIKEINVQKAKLVTELTGLVKICTSFQIQKVDLILQNTTVISEKNKLEADYMASSSQLRVTEQQFIELDDNRQRLLQKCKELMKKARQVCNLSADQAVPQEFQTQVPTIPNGHSSSPPMAFQDLPNTLDEIDALLTEERSRASCFTGLNPSVVEEYSKREVEIQQLTEELQGKKVELDEYRENISQVKERWLNPLKELVEKINEKFSNFFSSMQCAGEVDLHTENEEDYDKYGIRIRVKFRSSTQLHELTPHHQSGGERSVSTMLYLMALQELNRCPFRVVDEINQGMDPINERRVFEMVVNTACKENTSQYFFITPKLLQNLPYSEKMTVLFVYNGPHMLEPNRWNLKAFQRRRRRITFTQPQ.

Positions 1–44 (MATPSGKAAPPNPQVSKRSLPRDASSEVPSKRKNSNPLPTLPRP) are disordered. Phosphoserine is present on residues Ser25 and Ser35. 80 to 87 (GANGTGKS) is an ATP binding site. The stretch at 207 to 440 (EMHRYHCELK…LEKQRRSVSD (234 aa)) forms a coiled coil. Positions 441-644 (HITRFDNLMN…TSLKVAQFLT (204 aa)) are flexible hinge. Coiled coils occupy residues 645 to 753 (VTVD…VTEL), 780 to 828 (EKNK…QVCN), and 888 to 927 (SVVE…VKER).

It belongs to the SMC family. SMC5 subfamily. As to quaternary structure, forms a heterodimer with SMC6. Component of the SMC5-SMC6 complex which consists at least of SMC5, SMC6, NSMCE2, NSMCE1, NSMCE4A or EID3 and NSMCE3. Interacts with NSMCE2. Interacts with SLF2; this interaction induces an association of the SLF1-SLF2 complex with the SMC5-SMC6 complex. Interacts with RAD18; this interaction is increased in a SLF1 or SLF2-dependent manner. Sumoylated. In terms of processing, ubiquitinated. In terms of tissue distribution, expressed in testis but not ovary.

It localises to the nucleus. It is found in the chromosome. The protein localises to the PML body. The protein resides in the telomere. Its function is as follows. Core component of the SMC5-SMC6 complex, a complex involved in repair of DNA double-strand breaks by homologous recombination. The complex may promote sister chromatid homologous recombination by recruiting the SMC1-SMC3 cohesin complex to double-strand breaks. The complex is required for telomere maintenance via recombination and mediates sumoylation of shelterin complex (telosome) components. Required for sister chromatid cohesion during prometaphase and mitotic progression; the function seems to be independent of SMC6. This chain is Structural maintenance of chromosomes protein 5 (Smc5), found in Mus musculus (Mouse).